The following is a 664-amino-acid chain: Putative membrane protein Bcell_0381 (664 aa).

Residues Asp-588–Asn-616 are compositionally biased toward acidic residues. A disordered region spans residues Asp-588–Ile-622. A helical membrane pass occupies residues Tyr-636–Tyr-656.

Its subcellular location is the cell membrane. In Evansella cellulosilytica (strain ATCC 21833 / DSM 2522 / FERM P-1141 / JCM 9156 / N-4) (Bacillus cellulosilyticus), this protein is Putative membrane protein Bcell_0381.